The primary structure comprises 224 residues: tRNA (guanine-N(7)-)-methyltransferase (224 aa).

S-adenosyl-L-methionine-binding residues include E54, E79, E106, and D129. The active site involves D129. Residues K133 and D165 each coordinate substrate.

Belongs to the class I-like SAM-binding methyltransferase superfamily. TrmB family.

It catalyses the reaction guanosine(46) in tRNA + S-adenosyl-L-methionine = N(7)-methylguanosine(46) in tRNA + S-adenosyl-L-homocysteine. It participates in tRNA modification; N(7)-methylguanine-tRNA biosynthesis. Its function is as follows. Catalyzes the formation of N(7)-methylguanine at position 46 (m7G46) in tRNA. In Chlamydia caviae (strain ATCC VR-813 / DSM 19441 / 03DC25 / GPIC) (Chlamydophila caviae), this protein is tRNA (guanine-N(7)-)-methyltransferase.